A 465-amino-acid chain; its full sequence is Cysteine--tRNA ligase (465 aa).

Position 28 (Cys-28) interacts with Zn(2+). Positions 30-40 (MTVYDYCHLGH) match the 'HIGH' region motif. Zn(2+) contacts are provided by Cys-209, His-234, and Glu-238. A 'KMSKS' region motif is present at residues 266-270 (KMSKS). Lys-269 lines the ATP pocket.

It belongs to the class-I aminoacyl-tRNA synthetase family. As to quaternary structure, monomer. The cofactor is Zn(2+).

The protein resides in the cytoplasm. The enzyme catalyses tRNA(Cys) + L-cysteine + ATP = L-cysteinyl-tRNA(Cys) + AMP + diphosphate. This is Cysteine--tRNA ligase from Nitrosomonas europaea (strain ATCC 19718 / CIP 103999 / KCTC 2705 / NBRC 14298).